We begin with the raw amino-acid sequence, 923 residues long: Isoleucine--tRNA ligase (923 aa).

The 'HIGH' region motif lies at 57–67; sequence PYANGDIHMGH. E553 serves as a coordination point for L-isoleucyl-5'-AMP. A 'KMSKS' region motif is present at residues 594 to 598; it reads KMSKS. K597 provides a ligand contact to ATP. Residues C888, C891, C908, and C911 each coordinate Zn(2+).

It belongs to the class-I aminoacyl-tRNA synthetase family. IleS type 1 subfamily. As to quaternary structure, monomer. The cofactor is Zn(2+).

Its subcellular location is the cytoplasm. The catalysed reaction is tRNA(Ile) + L-isoleucine + ATP = L-isoleucyl-tRNA(Ile) + AMP + diphosphate. Functionally, catalyzes the attachment of isoleucine to tRNA(Ile). As IleRS can inadvertently accommodate and process structurally similar amino acids such as valine, to avoid such errors it has two additional distinct tRNA(Ile)-dependent editing activities. One activity is designated as 'pretransfer' editing and involves the hydrolysis of activated Val-AMP. The other activity is designated 'posttransfer' editing and involves deacylation of mischarged Val-tRNA(Ile). The polypeptide is Isoleucine--tRNA ligase (Shouchella clausii (strain KSM-K16) (Alkalihalobacillus clausii)).